A 189-amino-acid polypeptide reads, in one-letter code: Elongation factor P (189 aa).

It belongs to the elongation factor P family.

It is found in the cytoplasm. It functions in the pathway protein biosynthesis; polypeptide chain elongation. Functionally, involved in peptide bond synthesis. Stimulates efficient translation and peptide-bond synthesis on native or reconstituted 70S ribosomes in vitro. Probably functions indirectly by altering the affinity of the ribosome for aminoacyl-tRNA, thus increasing their reactivity as acceptors for peptidyl transferase. This chain is Elongation factor P, found in Chloroflexus aggregans (strain MD-66 / DSM 9485).